The primary structure comprises 277 residues: NLP effector protein Pc109174 (277 aa).

The first 19 residues, 1–19 (MNLVPALVLLLALAQTVLG), serve as a signal peptide directing secretion. A Hepta-peptide GHRHDWE motif motif is present at residues 119–125 (KSRHLWA). Asn199 carries an N-linked (GlcNAc...) asparagine glycan.

This sequence belongs to the Necrosis inducing protein (NPP1) family.

The protein resides in the secreted. Functionally, secreted effector that contributes strongly to virulence during infection by P.capsici. Induces cell death in the Solanaceae, including hot pepper. The sequence is that of NLP effector protein Pc109174 from Phytophthora capsici.